We begin with the raw amino-acid sequence, 100 residues long: Urease subunit gamma (100 aa).

It belongs to the urease gamma subunit family. As to quaternary structure, heterotrimer of UreA (gamma), UreB (beta) and UreC (alpha) subunits. Three heterotrimers associate to form the active enzyme.

The protein resides in the cytoplasm. It catalyses the reaction urea + 2 H2O + H(+) = hydrogencarbonate + 2 NH4(+). Its pathway is nitrogen metabolism; urea degradation; CO(2) and NH(3) from urea (urease route): step 1/1. This chain is Urease subunit gamma, found in Yersinia bercovieri.